A 422-amino-acid chain; its full sequence is Histidine--tRNA ligase (422 aa).

This sequence belongs to the class-II aminoacyl-tRNA synthetase family. Homodimer.

It is found in the cytoplasm. The enzyme catalyses tRNA(His) + L-histidine + ATP = L-histidyl-tRNA(His) + AMP + diphosphate + H(+). This Mycolicibacterium vanbaalenii (strain DSM 7251 / JCM 13017 / BCRC 16820 / KCTC 9966 / NRRL B-24157 / PYR-1) (Mycobacterium vanbaalenii) protein is Histidine--tRNA ligase.